Here is a 279-residue protein sequence, read N- to C-terminus: Large ribosomal subunit protein uL2 (279 aa).

Disordered stretches follow at residues 33-58 (LLAP…GGGH) and 223-279 (GVAM…RKRG). 2 stretches are compositionally biased toward basic residues: residues 40–58 (KGGR…GGGH) and 269–279 (VRRRYATRKRG).

This sequence belongs to the universal ribosomal protein uL2 family. In terms of assembly, part of the 50S ribosomal subunit. Forms a bridge to the 30S subunit in the 70S ribosome.

Functionally, one of the primary rRNA binding proteins. Required for association of the 30S and 50S subunits to form the 70S ribosome, for tRNA binding and peptide bond formation. It has been suggested to have peptidyltransferase activity; this is somewhat controversial. Makes several contacts with the 16S rRNA in the 70S ribosome. The protein is Large ribosomal subunit protein uL2 of Salinispora arenicola (strain CNS-205).